A 299-amino-acid polypeptide reads, in one-letter code: tRNA dimethylallyltransferase (299 aa).

Position 11 to 18 (11 to 18 (GPTAVGKT)) interacts with ATP. Residue 13–18 (TAVGKT) participates in substrate binding. The segment at 36 to 39 (DSQQ) is interaction with substrate tRNA.

The protein belongs to the IPP transferase family. Monomer. The cofactor is Mg(2+).

It catalyses the reaction adenosine(37) in tRNA + dimethylallyl diphosphate = N(6)-dimethylallyladenosine(37) in tRNA + diphosphate. In terms of biological role, catalyzes the transfer of a dimethylallyl group onto the adenine at position 37 in tRNAs that read codons beginning with uridine, leading to the formation of N6-(dimethylallyl)adenosine (i(6)A). This is tRNA dimethylallyltransferase from Streptococcus pyogenes serotype M28 (strain MGAS6180).